Here is an 881-residue protein sequence, read N- to C-terminus: Putative SWI/SNF-related matrix-associated actin-dependent regulator of chromatin subfamily A member 3-like 1 (881 aa).

A Helicase ATP-binding domain is found at 272–486 (DKRPDPLRGG…YSLMAFLRFE (215 aa)). Residue 285-292 (DDMGLGKT) coordinates ATP. Positions 308 to 343 (STSTPTEEPLDGEGDKIEKKGKKRGRGKSSESVTRK) are disordered. A DEAH box motif is present at residues 437–440 (DEAH). Residues 635 to 674 (CPICISPPTNIIITRCAHIFCRACILQTLQRSKPLCPLCR) form an RING-type zinc finger. The segment at 681-703 (DLYNAPPPPPDSSNTDGEDAKSS) is disordered. The Helicase C-terminal domain maps to 711–876 (ALLSLLMASR…EREVNVEDVV (166 aa)).

Belongs to the SNF2/RAD54 helicase family. RAD16 subfamily.

The protein resides in the nucleus. Its function is as follows. Possesses intrinsic ATP-dependent nucleosome-remodeling activity. This activity may be required for transcriptional activation or repression of specific target promoters. This is Putative SWI/SNF-related matrix-associated actin-dependent regulator of chromatin subfamily A member 3-like 1 from Arabidopsis thaliana (Mouse-ear cress).